Here is a 341-residue protein sequence, read N- to C-terminus: L-threonine 3-dehydrogenase (341 aa).

C38 contributes to the Zn(2+) binding site. Catalysis depends on charge relay system residues T40 and H43. Zn(2+) contacts are provided by H63, E64, C93, C96, C99, and C107. Residues I175, D195, R200, L262–I264, and I286–Y287 contribute to the NAD(+) site.

This sequence belongs to the zinc-containing alcohol dehydrogenase family. As to quaternary structure, homotetramer. Requires Zn(2+) as cofactor.

The protein localises to the cytoplasm. The enzyme catalyses L-threonine + NAD(+) = (2S)-2-amino-3-oxobutanoate + NADH + H(+). Its pathway is amino-acid degradation; L-threonine degradation via oxydo-reductase pathway; glycine from L-threonine: step 1/2. In terms of biological role, catalyzes the NAD(+)-dependent oxidation of L-threonine to 2-amino-3-ketobutyrate. The polypeptide is L-threonine 3-dehydrogenase (Photorhabdus laumondii subsp. laumondii (strain DSM 15139 / CIP 105565 / TT01) (Photorhabdus luminescens subsp. laumondii)).